The sequence spans 375 residues: Protein arginine N-methyltransferase 6 (375 aa).

The interval 1–38 (MSQPKKRKLESGGGGEGGEGTEEEDGAEREAALERPRR) is disordered. Thr-21 carries the phosphothreonine modification. A compositionally biased stretch (basic and acidic residues) spans 28–38 (EREAALERPRR). Residues Arg-29, Arg-35, and Arg-37 each carry the asymmetric dimethylarginine; by autocatalysis modification. The SAM-dependent MTase PRMT-type domain occupies 44-374 (DQLYYECYSD…EEKTKDFAME (331 aa)). S-adenosyl-L-methionine contacts are provided by His-57, Arg-66, Gly-90, Glu-112, and Glu-141. Active-site residues include Glu-155 and Glu-164.

It belongs to the class I-like SAM-binding methyltransferase superfamily. Protein arginine N-methyltransferase family. PRMT6 subfamily. As to quaternary structure, interacts with EPB41L3 and NCOA1. (Microbial infection) Interacts with (and methylates) HIV-1 Tat, Rev and Nucleocapsid protein p7 (NC). In terms of assembly, (Microbial infection) Interacts with human cytomegalovirus protein UL69. Automethylation enhances its stability and antiretroviral activity. Highly expressed in kidney and testis.

It is found in the nucleus. It catalyses the reaction L-arginyl-[protein] + 2 S-adenosyl-L-methionine = N(omega),N(omega)-dimethyl-L-arginyl-[protein] + 2 S-adenosyl-L-homocysteine + 2 H(+). Functionally, arginine methyltransferase that can catalyze the formation of both omega-N monomethylarginine (MMA) and asymmetrical dimethylarginine (aDMA), with a strong preference for the formation of aDMA. Preferentially methylates arginyl residues present in a glycine and arginine-rich domain and displays preference for monomethylated substrates. Specifically mediates the asymmetric dimethylation of histone H3 'Arg-2' to form H3R2me2a. H3R2me2a represents a specific tag for epigenetic transcriptional repression and is mutually exclusive with methylation on histone H3 'Lys-4' (H3K4me2 and H3K4me3). Acts as a transcriptional repressor of various genes such as HOXA2, THBS1 and TP53. Repression of TP53 blocks cellular senescence. Also methylates histone H2A and H4 'Arg-3' (H2AR3me and H4R3me, respectively). Acts as a regulator of DNA base excision during DNA repair by mediating the methylation of DNA polymerase beta (POLB), leading to the stimulation of its polymerase activity by enhancing DNA binding and processivity. Methylates HMGA1. Regulates alternative splicing events. Acts as a transcriptional coactivator of a number of steroid hormone receptors including ESR1, ESR2, PGR and NR3C1. Promotes fasting-induced transcriptional activation of the gluconeogenic program through methylation of the CRTC2 transcription coactivator. May play a role in innate immunity against HIV-1 in case of infection by methylating and impairing the function of various HIV-1 proteins such as Tat, Rev and Nucleocapsid protein p7 (NC). Methylates GPS2, protecting GPS2 from ubiquitination and degradation. Methylates SIRT7, inhibiting SIRT7 histone deacetylase activity and promoting mitochondria biogenesis. This chain is Protein arginine N-methyltransferase 6 (PRMT6), found in Homo sapiens (Human).